Here is a 386-residue protein sequence, read N- to C-terminus: Succinate--CoA ligase [ADP-forming] subunit beta (386 aa).

An ATP-grasp domain is found at lysine 9–glutamate 244. Residues lysine 46, glycine 53–glycine 55, glutamate 99, serine 102, and glutamate 107 each bind ATP. Mg(2+) contacts are provided by asparagine 199 and aspartate 213. Substrate is bound by residues asparagine 264 and glycine 321 to methionine 323.

This sequence belongs to the succinate/malate CoA ligase beta subunit family. Heterotetramer of two alpha and two beta subunits. Mg(2+) serves as cofactor.

The enzyme catalyses succinate + ATP + CoA = succinyl-CoA + ADP + phosphate. The catalysed reaction is GTP + succinate + CoA = succinyl-CoA + GDP + phosphate. It participates in carbohydrate metabolism; tricarboxylic acid cycle; succinate from succinyl-CoA (ligase route): step 1/1. Its function is as follows. Succinyl-CoA synthetase functions in the citric acid cycle (TCA), coupling the hydrolysis of succinyl-CoA to the synthesis of either ATP or GTP and thus represents the only step of substrate-level phosphorylation in the TCA. The beta subunit provides nucleotide specificity of the enzyme and binds the substrate succinate, while the binding sites for coenzyme A and phosphate are found in the alpha subunit. This Wolbachia sp. subsp. Brugia malayi (strain TRS) protein is Succinate--CoA ligase [ADP-forming] subunit beta.